We begin with the raw amino-acid sequence, 172 residues long: Adenine phosphoribosyltransferase (172 aa).

This sequence belongs to the purine/pyrimidine phosphoribosyltransferase family. As to quaternary structure, homodimer.

The protein resides in the cytoplasm. It carries out the reaction AMP + diphosphate = 5-phospho-alpha-D-ribose 1-diphosphate + adenine. The protein operates within purine metabolism; AMP biosynthesis via salvage pathway; AMP from adenine: step 1/1. In terms of biological role, catalyzes a salvage reaction resulting in the formation of AMP, that is energically less costly than de novo synthesis. The polypeptide is Adenine phosphoribosyltransferase (Staphylococcus haemolyticus (strain JCSC1435)).